We begin with the raw amino-acid sequence, 281 residues long: Release factor glutamine methyltransferase (281 aa).

S-adenosyl-L-methionine is bound by residues 121–125, Asp-144, and Asn-188; that span reads GSGTG. Substrate is bound at residue 188 to 191; it reads NPPY.

It belongs to the protein N5-glutamine methyltransferase family. PrmC subfamily.

It catalyses the reaction L-glutaminyl-[peptide chain release factor] + S-adenosyl-L-methionine = N(5)-methyl-L-glutaminyl-[peptide chain release factor] + S-adenosyl-L-homocysteine + H(+). Methylates the class 1 translation termination release factors RF1/PrfA and RF2/PrfB on the glutamine residue of the universally conserved GGQ motif. This is Release factor glutamine methyltransferase from Aquifex aeolicus (strain VF5).